The primary structure comprises 201 residues: 3-isopropylmalate dehydratase small subunit (201 aa).

This sequence belongs to the LeuD family. LeuD type 1 subfamily. In terms of assembly, heterodimer of LeuC and LeuD.

It carries out the reaction (2R,3S)-3-isopropylmalate = (2S)-2-isopropylmalate. It functions in the pathway amino-acid biosynthesis; L-leucine biosynthesis; L-leucine from 3-methyl-2-oxobutanoate: step 2/4. In terms of biological role, catalyzes the isomerization between 2-isopropylmalate and 3-isopropylmalate, via the formation of 2-isopropylmaleate. In Jannaschia sp. (strain CCS1), this protein is 3-isopropylmalate dehydratase small subunit.